The primary structure comprises 764 residues: 5-methyltetrahydropteroyltriglutamate--homocysteine methyltransferase (764 aa).

5-methyltetrahydropteroyltri-L-glutamate-binding positions include 16-19 (RELK) and lysine 121. L-homocysteine-binding positions include 440-442 (IGS) and glutamate 493. L-methionine is bound by residues 440–442 (IGS) and glutamate 493. 5-methyltetrahydropteroyltri-L-glutamate is bound by residues 524–525 (RC) and tryptophan 570. L-homocysteine is bound at residue aspartate 608. An L-methionine-binding site is contributed by aspartate 608. Position 614 (glutamate 614) interacts with 5-methyltetrahydropteroyltri-L-glutamate. Positions 650, 652, and 674 each coordinate Zn(2+). The active-site Proton donor is histidine 703. Cysteine 735 is a Zn(2+) binding site.

Belongs to the vitamin-B12 independent methionine synthase family. The cofactor is Zn(2+).

It catalyses the reaction 5-methyltetrahydropteroyltri-L-glutamate + L-homocysteine = tetrahydropteroyltri-L-glutamate + L-methionine. The protein operates within amino-acid biosynthesis; L-methionine biosynthesis via de novo pathway; L-methionine from L-homocysteine (MetE route): step 1/1. Functionally, catalyzes the transfer of a methyl group from 5-methyltetrahydrofolate to homocysteine resulting in methionine formation. This Burkholderia ambifaria (strain ATCC BAA-244 / DSM 16087 / CCUG 44356 / LMG 19182 / AMMD) (Burkholderia cepacia (strain AMMD)) protein is 5-methyltetrahydropteroyltriglutamate--homocysteine methyltransferase.